A 291-amino-acid polypeptide reads, in one-letter code: Bis(5'-nucleosyl)-tetraphosphatase, symmetrical (291 aa).

This sequence belongs to the Ap4A hydrolase family.

It carries out the reaction P(1),P(4)-bis(5'-adenosyl) tetraphosphate + H2O = 2 ADP + 2 H(+). In terms of biological role, hydrolyzes diadenosine 5',5'''-P1,P4-tetraphosphate to yield ADP. This Pseudomonas syringae pv. syringae (strain B728a) protein is Bis(5'-nucleosyl)-tetraphosphatase, symmetrical.